The primary structure comprises 118 residues: Large ribosomal subunit protein bL20 (118 aa).

Belongs to the bacterial ribosomal protein bL20 family.

Binds directly to 23S ribosomal RNA and is necessary for the in vitro assembly process of the 50S ribosomal subunit. It is not involved in the protein synthesizing functions of that subunit. This chain is Large ribosomal subunit protein bL20, found in Shigella dysenteriae serotype 1 (strain Sd197).